Here is a 294-residue protein sequence, read N- to C-terminus: Acetylglutamate kinase (294 aa).

Substrate is bound by residues 66-67 (GG), arginine 88, and asparagine 193.

Belongs to the acetylglutamate kinase family. ArgB subfamily.

Its subcellular location is the cytoplasm. The catalysed reaction is N-acetyl-L-glutamate + ATP = N-acetyl-L-glutamyl 5-phosphate + ADP. It functions in the pathway amino-acid biosynthesis; L-arginine biosynthesis; N(2)-acetyl-L-ornithine from L-glutamate: step 2/4. In terms of biological role, catalyzes the ATP-dependent phosphorylation of N-acetyl-L-glutamate. The polypeptide is Acetylglutamate kinase (Agrobacterium fabrum (strain C58 / ATCC 33970) (Agrobacterium tumefaciens (strain C58))).